The chain runs to 1100 residues: Collagen alpha-2(I) chain (1100 aa).

A disordered region spans residues 1-982; that stretch reads QYDGVKAPDP…PGPAGGGYDV (982 aa). 3 stretches are compositionally biased toward low complexity: residues 122–170, 200–209, and 216–237; these read EPGA…AAGP, EPGPNGAVGP, and PGNN…AGAP. The segment covering 239–249 has biased composition (pro residues); it reads FPGPRGGPGPQ. Residues 251–261 are compositionally biased toward low complexity; it reads PQGAAGQRGLA. Positions 268-277 are enriched in gly residues; that stretch reads GVKGDGGPKG. 4 stretches are compositionally biased toward low complexity: residues 333-352, 358-385, 435-448, and 460-472; these read MPGA…PGDA, SGPA…AGPA, APGP…TGAT, and QGAS…QGLP. A compositionally biased stretch (gly residues) spans 473-482; that stretch reads GPAGGAGEAG. Residues 507–517 are compositionally biased toward low complexity; that stretch reads NPGAAGASGPQ. Over residues 530 to 557 the composition is skewed to gly residues; sequence GTDGGKGEPGAAGAAGGPGHQGPGGMPG. Residues 568–579 show a composition bias toward basic and acidic residues; it reads KGEKGEGGHRGP. The span at 633–646 shows a compositional bias: low complexity; the sequence is PAGAPGFAGPPGAD. Residues 656–665 show a composition bias toward gly residues; the sequence is GPSGGKGESG. Composition is skewed to low complexity over residues 666 to 691, 702 to 729, and 757 to 775; these read PSGP…TGAR, FPGA…PAGK, and SGEK…LGLQ. Residues 788–797 are compositionally biased toward gly residues; that stretch reads GSPGGAGAVG. Low complexity-rich tracts occupy residues 798-820 and 854-866; these read EAGR…LGLP and AGPT…PGNR. Residues 867–876 are compositionally biased toward gly residues; it reads GESGPGGAAG. The segment covering 877-892 has biased composition (low complexity); it reads AVGPAGARGAAGPSGP. Positions 893–907 are enriched in basic and acidic residues; sequence RGEKGVAGEKGERGM. A compositionally biased stretch (low complexity) spans 916–935; sequence LQGMPGPSGPSGDTGSAGPN. The region spanning 1071–1100 is the Fibrillar collagen NC1 domain; that stretch reads TRLPLLDLAPLDLGGADQEFGLDLGPVCFK.

Belongs to the fibrillar collagen family.

The protein localises to the secreted. The protein resides in the extracellular space. It is found in the extracellular matrix. This Epinephelus caninus (Dogtooth grouper) protein is Collagen alpha-2(I) chain.